The sequence spans 185 residues: Putative tyrosine-protein phosphatase OCA1 (185 aa).

The 161-residue stretch at 18 to 178 folds into the Tyrosine-protein phosphatase domain; that stretch reads NFCPVEKQLY…TVEIGSGKGS (161 aa). The active-site Phosphocysteine intermediate is C116.

Belongs to the protein-tyrosine phosphatase family.

The protein resides in the cytoplasm. The enzyme catalyses O-phospho-L-tyrosyl-[protein] + H2O = L-tyrosyl-[protein] + phosphate. Putative tyrosine-protein phosphatase required for protection against superoxide stress. The polypeptide is Putative tyrosine-protein phosphatase OCA1 (OCA1) (Meyerozyma guilliermondii (strain ATCC 6260 / CBS 566 / DSM 6381 / JCM 1539 / NBRC 10279 / NRRL Y-324) (Yeast)).